The chain runs to 209 residues: Thiamine-phosphate synthase (209 aa).

4-amino-2-methyl-5-(diphosphooxymethyl)pyrimidine-binding positions include 38–42 (QYRAK) and Asn70. The Mg(2+) site is built by Asp71 and Asp90. Ser109 contacts 4-amino-2-methyl-5-(diphosphooxymethyl)pyrimidine. 135–137 (TST) contacts 2-[(2R,5Z)-2-carboxy-4-methylthiazol-5(2H)-ylidene]ethyl phosphate. Lys138 serves as a coordination point for 4-amino-2-methyl-5-(diphosphooxymethyl)pyrimidine. 2-[(2R,5Z)-2-carboxy-4-methylthiazol-5(2H)-ylidene]ethyl phosphate-binding positions include Gly165 and 185 to 186 (VS).

It belongs to the thiamine-phosphate synthase family. It depends on Mg(2+) as a cofactor.

The enzyme catalyses 2-[(2R,5Z)-2-carboxy-4-methylthiazol-5(2H)-ylidene]ethyl phosphate + 4-amino-2-methyl-5-(diphosphooxymethyl)pyrimidine + 2 H(+) = thiamine phosphate + CO2 + diphosphate. The catalysed reaction is 2-(2-carboxy-4-methylthiazol-5-yl)ethyl phosphate + 4-amino-2-methyl-5-(diphosphooxymethyl)pyrimidine + 2 H(+) = thiamine phosphate + CO2 + diphosphate. It carries out the reaction 4-methyl-5-(2-phosphooxyethyl)-thiazole + 4-amino-2-methyl-5-(diphosphooxymethyl)pyrimidine + H(+) = thiamine phosphate + diphosphate. The protein operates within cofactor biosynthesis; thiamine diphosphate biosynthesis; thiamine phosphate from 4-amino-2-methyl-5-diphosphomethylpyrimidine and 4-methyl-5-(2-phosphoethyl)-thiazole: step 1/1. Functionally, condenses 4-methyl-5-(beta-hydroxyethyl)thiazole monophosphate (THZ-P) and 2-methyl-4-amino-5-hydroxymethyl pyrimidine pyrophosphate (HMP-PP) to form thiamine monophosphate (TMP). The polypeptide is Thiamine-phosphate synthase (Persephonella marina (strain DSM 14350 / EX-H1)).